Here is a 525-residue protein sequence, read N- to C-terminus: Cytochrome P450 monooxygenase tpcC (525 aa).

The chain crosses the membrane as a helical span at residues 13–33 (LPVTLVSLLVGSIFYFCYLTV). Cysteine 457 serves as a coordination point for heme.

This sequence belongs to the cytochrome P450 family. It depends on heme as a cofactor.

Its subcellular location is the membrane. It participates in secondary metabolite biosynthesis; terpenoid biosynthesis. Cytochrome P450 monooxygenase; part of the gene cluster that mediates the biosynthesis of terpestacin. The bifunctional terpene synthase tpcA converts isopentenyl diphosphate (IPP) and dimethylallyl diphosphate (DMAPP) into the sesterterpene preterpestacin I. The C-terminal prenyltransferase (PT) domain of tpcA catalyzes formation of GFPP, whereas the N-terminal terpene cyclase (TC) domain catalyzes the cyclization of GFPP into preterpestacin I. The cytochrome P450 monooxygenase tpcB then hydroxylates preterpestacin I to yield 24-hydroxypreterpstacin I (renamed as preterpestacin II) whereas the cytochrome P450 monooxygenase tpcC further hydroxylates preterpestacin II to yield 16,17-dihydroxypreterpestacin II (renamed as preterpestacin III). Finally, the FAD-dependent monooxygenase tpcD converts preterpestacin III into terpestacin. This is Cytochrome P450 monooxygenase tpcC from Cochliobolus heterostrophus (strain C5 / ATCC 48332 / race O) (Southern corn leaf blight fungus).